Here is a 91-residue protein sequence, read N- to C-terminus: MSLNSAEKAEIINEYKRGDKDTGSPEVQVSLITGRIKYLTDHFKENKKDFHSRRGLQELVNKRRKLLKYLKRNDQARYQTLIQNLGLRDSY.

It belongs to the universal ribosomal protein uS15 family. Part of the 30S ribosomal subunit. Forms a bridge to the 50S subunit in the 70S ribosome, contacting the 23S rRNA.

One of the primary rRNA binding proteins, it binds directly to 16S rRNA where it helps nucleate assembly of the platform of the 30S subunit by binding and bridging several RNA helices of the 16S rRNA. Its function is as follows. Forms an intersubunit bridge (bridge B4) with the 23S rRNA of the 50S subunit in the ribosome. The protein is Small ribosomal subunit protein uS15 of Legionella pneumophila (strain Paris).